We begin with the raw amino-acid sequence, 478 residues long: Shikimate biosynthesis protein AroDE (478 aa).

Residues 1-208 (MLCTTISGPS…LKHHYFYNFA (208 aa)) are 3-dehydroquinate dehydratase. Residues Ser21, 29 to 31 (EMR), and 55 to 57 (AWK) each bind 3-dehydroquinate. The Proton donor/acceptor; for 3-dehydroquinate dehydratase activity role is filled by His110. Lys133 (schiff-base intermediate with substrate; for 3-dehydroquinate dehydratase activity) is an active-site residue. Residues Arg171 and Gln196 each contribute to the 3-dehydroquinate site. The tract at residues 209 to 478 (SLSAQSPICA…VLASLFSIAP (270 aa)) is shikimate 5-dehydrogenase. Residue 226–228 (SIG) coordinates shikimate. Residue Lys277 is the Proton acceptor; for shikimate dehydrogenase activity of the active site. Shikimate-binding residues include Asn298 and Asp313. Residues 337–341 (GAGGA), 360–362 (NRT), and Gly435 each bind NADP(+). Gln442 provides a ligand contact to shikimate.

This sequence in the N-terminal section; belongs to the type-I 3-dehydroquinase family. The protein in the C-terminal section; belongs to the shikimate dehydrogenase family.

It catalyses the reaction 3-dehydroquinate = 3-dehydroshikimate + H2O. It carries out the reaction shikimate + NADP(+) = 3-dehydroshikimate + NADPH + H(+). It participates in metabolic intermediate biosynthesis; chorismate biosynthesis; chorismate from D-erythrose 4-phosphate and phosphoenolpyruvate: step 3/7. It functions in the pathway metabolic intermediate biosynthesis; chorismate biosynthesis; chorismate from D-erythrose 4-phosphate and phosphoenolpyruvate: step 4/7. Functionally, bifunctional enzyme that catalyzes two sequential steps of the aromatic amino acids biosynthetic pathway. In the first reaction, the AroD domain catalyzes the cis-dehydration of 3-dehydroquinate (DHQ) and introduces the first double bond of the aromatic ring to yield 3-dehydroshikimate; in the second reaction, the AroE domain catalyzes the reversible NADPH linked reduction of 3-dehydroshikimate (DHSA) to yield shikimate (SA). The sequence is that of Shikimate biosynthesis protein AroDE from Chlamydia trachomatis serovar D (strain ATCC VR-885 / DSM 19411 / UW-3/Cx).